The sequence spans 214 residues: tRNA (guanine-N(7)-)-methyltransferase (214 aa).

S-adenosyl-L-methionine-binding residues include Glu44, Glu69, Asp96, and Asp118. The active site involves Asp118. Residues Lys122, Asp154, and 191–194 (TEYE) contribute to the substrate site.

It belongs to the class I-like SAM-binding methyltransferase superfamily. TrmB family.

It carries out the reaction guanosine(46) in tRNA + S-adenosyl-L-methionine = N(7)-methylguanosine(46) in tRNA + S-adenosyl-L-homocysteine. Its pathway is tRNA modification; N(7)-methylguanine-tRNA biosynthesis. In terms of biological role, catalyzes the formation of N(7)-methylguanine at position 46 (m7G46) in tRNA. The polypeptide is tRNA (guanine-N(7)-)-methyltransferase (Listeria monocytogenes serovar 1/2a (strain ATCC BAA-679 / EGD-e)).